A 340-amino-acid chain; its full sequence is Heat-inducible transcription repressor HrcA (340 aa).

This sequence belongs to the HrcA family.

Its function is as follows. Negative regulator of class I heat shock genes (grpE-dnaK-dnaJ and groELS operons). Prevents heat-shock induction of these operons. This chain is Heat-inducible transcription repressor HrcA, found in Mycoplasmopsis synoviae (strain 53) (Mycoplasma synoviae).